The chain runs to 162 residues: Ribosome maturation factor RimM (162 aa).

The PRC barrel domain occupies 90 to 161; it reads EDCYYEADIV…KIIIKPLEVW (72 aa).

The protein belongs to the RimM family. Binds ribosomal protein uS19.

The protein localises to the cytoplasm. Functionally, an accessory protein needed during the final step in the assembly of 30S ribosomal subunit, possibly for assembly of the head region. Essential for efficient processing of 16S rRNA. May be needed both before and after RbfA during the maturation of 16S rRNA. It has affinity for free ribosomal 30S subunits but not for 70S ribosomes. This is Ribosome maturation factor RimM from Clostridium novyi (strain NT).